The sequence spans 660 residues: Phosphatidylinositol-binding clathrin assembly protein (660 aa).

Residue Ser2 is modified to N-acetylserine. Positions 14–145 (QHSVTGSAVS…VSYRQVAFDF (132 aa)) constitute an ENTH domain. Phosphoserine is present on residues Ser16 and Ser20. The tract at residues 221–294 (KYFDMKKNQC…LEGKKIKDST (74 aa)) is interaction with PIMREG. Lys238 is covalently cross-linked (Glycyl lysine isopeptide (Lys-Gly) (interchain with G-Cter in SUMO2)). Phosphoserine occurs at positions 303 and 315. Positions 556–566 (GTTKNDVSWSQ) are enriched in polar residues. Positions 556-580 (GTTKNDVSWSQPGEKKLTGGSNWQP) are disordered.

It belongs to the PICALM/SNAP91 family. In terms of assembly, binds to clathrin; involves primarily the C-terminal sequences, but the full-length protein is required for full binding capacity. Binds phosphatidylinositol 4,5- bisphosphate. Interacts with PIMREG; this interaction may change the subcellular location into the nucleus. Interacts with AP2A1 (via its alpha-appendage domain). Interacts (via N-terminus) with VAMP2; VAMP3; VAMP7 and VAMP8 (Via N-terminus). Interacts with LC3/MAP1LC3A. Skins and livers of 1-week-old mice.

The protein resides in the cell membrane. It is found in the membrane. It localises to the clathrin-coated pit. Its subcellular location is the golgi apparatus. The protein localises to the cytoplasmic vesicle. The protein resides in the clathrin-coated vesicle. It is found in the nucleus. Cytoplasmic adapter protein that plays a critical role in clathrin-mediated endocytosis which is important in processes such as internalization of cell receptors, synaptic transmission or removal of apoptotic cells. Recruits AP-2 and attaches clathrin triskelions to the cytoplasmic side of plasma membrane leading to clathrin-coated vesicles (CCVs) assembly. Furthermore, regulates clathrin-coated vesicle size and maturation by directly sensing and driving membrane curvature. In addition to binding to clathrin, mediates the endocytosis of small R-SNARES (Soluble NSF Attachment Protein REceptors) between plasma membranes and endosomes including VAMP2, VAMP3, VAMP4, VAMP7 or VAMP8. In turn, PICALM-dependent SNARE endocytosis is required for the formation and maturation of autophagic precursors. Modulates thereby autophagy and the turnover of autophagy substrates such as MAPT/TAU or amyloid precursor protein cleaved C-terminal fragment (APP-CTF). The sequence is that of Phosphatidylinositol-binding clathrin assembly protein (Picalm) from Mus musculus (Mouse).